The following is a 314-amino-acid chain: Atrochrysone carboxyl ACP thioesterase AgnL7 (314 aa).

Zn(2+) contacts are provided by H103, H105, D107, and H108. The Proton donor/acceptor role is filled by D107.

It belongs to the metallo-beta-lactamase superfamily. The cofactor is Zn(2+).

The enzyme catalyses atrochrysone carboxyl-[ACP] + H2O = atrochrysone carboxylate + holo-[ACP] + H(+). It functions in the pathway secondary metabolite biosynthesis. Functionally, atrochrysone carboxyl ACP thioesterase; part of the gene cluster that mediates the biosynthesis of agnestins, dihydroxy-xanthone metabolites. The pathway begins with the assembly and cyclization of atrochrysone thioester by the non-reducing polyketide synthase Agnpks1. The atrochrysone carboxyl ACP thioesterase AgnL7 then breaks the thioester bond and releases the atrochrysone carboxylic acid as the first enzyme-free intermediate. The decarboxylase AgnL1 then catalyzes the concerted decarboxylation-elimination required to convert atochrysone carboxylic acid into emodin anthrone, which is further oxidized to emodin by the anthrone oxygenase AgnL2. Emodin then undergoes reduction catalyzed by the oxidoreductase AgnL4 to yield the dihydroquinone tautomer which is the substrate for reduction by the short chain dehydrogenase AgnL6 reduction to produce hydroxyketone, followed by AgnL8 dehydration and likely spontaneous autoxidation to chrysophanol. Baeyer-Villiger oxidation by the oxidase AgnL3 leads to monodictyphenone via cleavage of the C-10/C-10a bond of chrysophanol. Alternative cleavage at the C-4a/C-10 bond of chrysophanol also leads to the formation some cephalone F. Further conversion to agnestins A and B, requires reduction to dihydro-monodictyphenone, oxidation to agnestin C probably via an epoxide, and rearrangement to either agnestin A or agnestin B directly, although agnestin A or agnestin B can also interconvert. Within the cluster, AgnR1 is the only unassigned oxidoreductase present which could be involved in this conversion. However, AgnR1 seems not to be involved in this step, and thus genes involved in the proposed oxidation/reduction may be located elsewhere on the genome. Further agnestin A derivatives are probably formed by spontaneous decarboxylations, dehydrations and methanolysis reactions. The protein is Atrochrysone carboxyl ACP thioesterase AgnL7 of Paecilomyces divaricatus (Penicillium divaricatum).